A 128-amino-acid polypeptide reads, in one-letter code: Sulfurtransferase TusD (128 aa).

Cysteine 78 functions as the Cysteine persulfide intermediate in the catalytic mechanism.

Belongs to the DsrE/TusD family. In terms of assembly, heterohexamer, formed by a dimer of trimers. The hexameric TusBCD complex contains 2 copies each of TusB, TusC and TusD. The TusBCD complex interacts with TusE.

The protein localises to the cytoplasm. Functionally, part of a sulfur-relay system required for 2-thiolation of 5-methylaminomethyl-2-thiouridine (mnm(5)s(2)U) at tRNA wobble positions. Accepts sulfur from TusA and transfers it in turn to TusE. The polypeptide is Sulfurtransferase TusD (Salmonella dublin (strain CT_02021853)).